The sequence spans 124 residues: Large ribosomal subunit protein mL51 (124 aa).

The transit peptide at 1-31 (MSVFGGLWRSAVNLCQSSRLFSTGSCARIRM) directs the protein to the mitochondrion.

It belongs to the mitochondrion-specific ribosomal protein mL51 family. In terms of assembly, component of the mitochondrial ribosome large subunit (39S) which comprises a 16S rRNA and about 50 distinct proteins.

Its subcellular location is the mitochondrion. The sequence is that of Large ribosomal subunit protein mL51 (mrpl51) from Danio rerio (Zebrafish).